Here is a 72-residue protein sequence, read N- to C-terminus: Sperm protein associated with the nucleus on the X chromosome N1 (72 aa).

Positions 1 to 44 (MEQPTSSINGEKRKSPCESNNENDEMQETPNRDLAPEPSLKKMK) are disordered.

Belongs to the SPAN-X family.

This is Sperm protein associated with the nucleus on the X chromosome N1 (SPANXN1) from Homo sapiens (Human).